The primary structure comprises 333 residues: Holliday junction branch migration complex subunit RuvB (333 aa).

The tract at residues 1–181 is large ATPase domain (RuvB-L); that stretch reads MNDILNKEPM…FGISSHMEYY (181 aa). ATP-binding positions include Leu20, Arg21, Gly62, Lys65, Thr66, Thr67, 128–130, Arg171, Tyr181, and Arg218; that span reads EDF. Residue Thr66 coordinates Mg(2+). Positions 182-252 are small ATPAse domain (RuvB-S); the sequence is QERDLEEIVK…ITDKALSILD (71 aa). Residues 255–333 are head domain (RuvB-H); it reads AAGLDYIDQK…HLGYVYNEED (79 aa). DNA-binding residues include Arg291, Arg310, and Arg315.

Belongs to the RuvB family. As to quaternary structure, homohexamer. Forms an RuvA(8)-RuvB(12)-Holliday junction (HJ) complex. HJ DNA is sandwiched between 2 RuvA tetramers; dsDNA enters through RuvA and exits via RuvB. An RuvB hexamer assembles on each DNA strand where it exits the tetramer. Each RuvB hexamer is contacted by two RuvA subunits (via domain III) on 2 adjacent RuvB subunits; this complex drives branch migration. In the full resolvosome a probable DNA-RuvA(4)-RuvB(12)-RuvC(2) complex forms which resolves the HJ.

It localises to the cytoplasm. It catalyses the reaction ATP + H2O = ADP + phosphate + H(+). Functionally, the RuvA-RuvB-RuvC complex processes Holliday junction (HJ) DNA during genetic recombination and DNA repair, while the RuvA-RuvB complex plays an important role in the rescue of blocked DNA replication forks via replication fork reversal (RFR). RuvA specifically binds to HJ cruciform DNA, conferring on it an open structure. The RuvB hexamer acts as an ATP-dependent pump, pulling dsDNA into and through the RuvAB complex. RuvB forms 2 homohexamers on either side of HJ DNA bound by 1 or 2 RuvA tetramers; 4 subunits per hexamer contact DNA at a time. Coordinated motions by a converter formed by DNA-disengaged RuvB subunits stimulates ATP hydrolysis and nucleotide exchange. Immobilization of the converter enables RuvB to convert the ATP-contained energy into a lever motion, pulling 2 nucleotides of DNA out of the RuvA tetramer per ATP hydrolyzed, thus driving DNA branch migration. The RuvB motors rotate together with the DNA substrate, which together with the progressing nucleotide cycle form the mechanistic basis for DNA recombination by continuous HJ branch migration. Branch migration allows RuvC to scan DNA until it finds its consensus sequence, where it cleaves and resolves cruciform DNA. The protein is Holliday junction branch migration complex subunit RuvB of Lactococcus lactis subsp. lactis (strain IL1403) (Streptococcus lactis).